The primary structure comprises 148 residues: Large ribosomal subunit protein bL9 (148 aa).

The protein belongs to the bacterial ribosomal protein bL9 family.

Its function is as follows. Binds to the 23S rRNA. In Pseudomonas syringae pv. tomato (strain ATCC BAA-871 / DC3000), this protein is Large ribosomal subunit protein bL9.